The sequence spans 280 residues: UPF0276 protein NMB2142 (280 aa).

Belongs to the UPF0276 family.

This is UPF0276 protein NMB2142 from Neisseria meningitidis serogroup B (strain ATCC BAA-335 / MC58).